Reading from the N-terminus, the 566-residue chain is E3 ubiquitin-protein ligase RNF220 (566 aa).

Residue Lys-277 forms a Glycyl lysine isopeptide (Lys-Gly) (interchain with G-Cter in SUMO2) linkage. The interval 277 to 297 (KREGESPTASPHSSATDDLHH) is disordered. Position 390 is a phosphoserine (Ser-390). A coiled-coil region spans residues 485–513 (EDSAVTTFEALKARVRELERQLSRGDRYK). The required for targeting to the cytoplasm stretch occupies residues 514–522 (CLICMDSYS). An RING-type zinc finger spans residues 514-553 (CLICMDSYSMPLTSIQCWHVHCEECWLRTLGAKKLCPQCY).

As to quaternary structure, interacts with SIN3B. Interacts with CTNNB1 (via Armadillo repeats 2-8). Interacts with USP7 (via MATH domain). Auto-ubiquitinated; leads to proteasomal degradation.

It is found in the cytoplasm. The enzyme catalyses S-ubiquitinyl-[E2 ubiquitin-conjugating enzyme]-L-cysteine + [acceptor protein]-L-lysine = [E2 ubiquitin-conjugating enzyme]-L-cysteine + N(6)-ubiquitinyl-[acceptor protein]-L-lysine.. It participates in protein modification; protein ubiquitination. E3 ubiquitin-protein ligase that promotes the ubiquitination and proteasomal degradation of SIN3B. Independently of its E3 ligase activity, acts as a CTNNB1 stabilizer through USP7-mediated deubiquitination of CTNNB1 promoting Wnt signaling. This chain is E3 ubiquitin-protein ligase RNF220 (RNF220), found in Bos taurus (Bovine).